The chain runs to 298 residues: Small ribosomal subunit protein uS2 (298 aa).

A disordered region spans residues 240-298 (AGENWDTQAPGAGVPGSAFAAASAAAATSWEADGGDWAASSAPPAGESWAETQPTEAKW). Over residues 248 to 271 (APGAGVPGSAFAAASAAAATSWEA) the composition is skewed to low complexity. Over residues 289–298 (AETQPTEAKW) the composition is skewed to polar residues.

It belongs to the universal ribosomal protein uS2 family. In terms of assembly, component of the small ribosomal subunit. Mature ribosomes consist of a small (40S) and a large (60S) subunit. The 40S subunit contains about 33 different proteins and 1 molecule of RNA (18S). The 60S subunit contains about 49 different proteins and 3 molecules of RNA (25S, 5.8S and 5S). Interacts with rps21.

Its subcellular location is the cytoplasm. Its function is as follows. Required for the assembly and/or stability of the 40S ribosomal subunit. Required for the processing of the 20S rRNA-precursor to mature 18S rRNA in a late step of the maturation of 40S ribosomal subunits. The protein is Small ribosomal subunit protein uS2 (rps0) of Aspergillus clavatus (strain ATCC 1007 / CBS 513.65 / DSM 816 / NCTC 3887 / NRRL 1 / QM 1276 / 107).